The following is a 176-amino-acid chain: Inner membrane-spanning protein YciB (176 aa).

5 helical membrane-spanning segments follow: residues 3 to 23 (FLFDLFPIILFFAAFKLWGIF), 49 to 69 (TMLWVSLGVIVVFGGATLVLH), 72 to 92 (KFIQWKPTVLYWLFAVGLVAA), 118 to 138 (KLNLAWAAFFAALGVTNLYVV), and 149 to 169 (FKLFGTTGAIIVFVILQSLWL).

Belongs to the YciB family.

It localises to the cell inner membrane. Functionally, plays a role in cell envelope biogenesis, maintenance of cell envelope integrity and membrane homeostasis. The sequence is that of Inner membrane-spanning protein YciB from Burkholderia thailandensis (strain ATCC 700388 / DSM 13276 / CCUG 48851 / CIP 106301 / E264).